We begin with the raw amino-acid sequence, 741 residues long: Catalase-peroxidase (741 aa).

The first 23 residues, 1–23, serve as a signal peptide directing secretion; the sequence is MLKKIVTALGMSGMLLASSNAIA. Positions 102–223 form a cross-link, tryptophyl-tyrosyl-methioninium (Trp-Tyr) (with M-249); it reads WHDAGTYRIY…YAATQMGLIY (122 aa). The active-site Proton acceptor is His103. The tryptophyl-tyrosyl-methioninium (Tyr-Met) (with W-102) cross-link spans 223–249; that stretch reads YVNPEGPDGKPDIKGAASEIRQAFRAM. His264 serves as a coordination point for heme b.

It belongs to the peroxidase family. Peroxidase/catalase subfamily. In terms of assembly, homodimer or homotetramer. The cofactor is heme b. In terms of processing, formation of the three residue Trp-Tyr-Met cross-link is important for the catalase, but not the peroxidase activity of the enzyme.

It carries out the reaction H2O2 + AH2 = A + 2 H2O. The enzyme catalyses 2 H2O2 = O2 + 2 H2O. Its function is as follows. Bifunctional enzyme with both catalase and broad-spectrum peroxidase activity. This Francisella tularensis subsp. tularensis (strain FSC 198) protein is Catalase-peroxidase.